A 119-amino-acid chain; its full sequence is Movement protein TGB2 (119 aa).

The Cytoplasmic segment spans residues 1-13 (MVRNNEIGARPNK). The helical transmembrane segment at 14-34 (YWPVVAAVVAICLFGFLTVTN) threads the bilayer. Residues 35-79 (QKHATQSGDNIHKFANGGQYRDGSKSIKYNCNNPRAYNGSSSNIT) are Lumenal-facing. The helical transmembrane segment at 80-100 (FSQLFLPVLLIGAALYAYLWF) threads the bilayer. The Cytoplasmic portion of the chain corresponds to 101–119 (TRPDCSVTCRGDCCRSYGG).

Belongs to the virgaviridae/benyvirus TGB2 movement protein family. Interacts with movement protein TGB3. TGB1-TGB3-TGB2 complex formation is enhanced by ATP hydrolysis.

It localises to the host cell junction. It is found in the host plasmodesma. The protein localises to the host endoplasmic reticulum membrane. Its subcellular location is the host cytoplasm. The protein resides in the host cytoskeleton. It localises to the host chloroplast envelope. Participates in the transport of viral genome to neighboring plant cells directly through plasmodesmata, without any budding. TGBp2 and TGBp3 are necessary for intracellular delivery of TGBp1-containing vRNPs to plasmodesmata. Can gate plasmodesmata and increase their size exclusion limit. To a lesser extent than TGB3, induces host actin cytoskeleton network thickening, which probably plays a major role in virus cell-to-cell movement. Binds ssRNA in a sequence non-specific manner. This Potato mop-top virus (isolate Potato/Sweden/Sw) (PMTV) protein is Movement protein TGB2.